The chain runs to 335 residues: MEGIIFGDLSTLPDLLSSLSPYKVVVLTNTTLKELWLEEVLTWLKEFKPQTIVVPDGEKYKDLDTVRYIWEKLLEMGFTRRSLLIGLGGGVITDIAGFVASTYMRGTYLGLVPTTLLAQVDAAIGGKTGINFYGKNIIGTFYLPKFVLICRDFLKTLPMVEILNGLAEVVKYGILDKEVYNAIKTMNSPREIVEREDIIKKSVAVKLRIVEEDLKENGKRRVLNLGHTVGHAIEKISDYKIKHGFAVSMGLVVEAKIGEILYGFDSGKVVEILTKFGLPVKIPFDPYTTLQAMKIDKKAWYGKIVIVVPVEIGKANIEEVDEKIILQALEEAKNA.

NAD(+) is bound by residues 56–61 (DGEKYK), 90–94 (GVITD), 114–115 (TT), Lys127, Lys135, and 153–156 (FLKT). Zn(2+)-binding residues include Glu168, His227, and His243.

This sequence belongs to the sugar phosphate cyclases superfamily. Dehydroquinate synthase family. Requires NAD(+) as cofactor. The cofactor is Co(2+). It depends on Zn(2+) as a cofactor.

It is found in the cytoplasm. It catalyses the reaction 7-phospho-2-dehydro-3-deoxy-D-arabino-heptonate = 3-dehydroquinate + phosphate. The protein operates within metabolic intermediate biosynthesis; chorismate biosynthesis; chorismate from D-erythrose 4-phosphate and phosphoenolpyruvate: step 2/7. Its function is as follows. Catalyzes the conversion of 3-deoxy-D-arabino-heptulosonate 7-phosphate (DAHP) to dehydroquinate (DHQ). The polypeptide is 3-dehydroquinate synthase (Pyrococcus furiosus (strain ATCC 43587 / DSM 3638 / JCM 8422 / Vc1)).